The chain runs to 428 residues: Enolase (428 aa).

Gln163 provides a ligand contact to (2R)-2-phosphoglycerate. The active-site Proton donor is Glu205. The Mg(2+) site is built by Asp242, Glu286, and Asp313. (2R)-2-phosphoglycerate contacts are provided by Lys338, Arg367, Ser368, and Lys389. The Proton acceptor role is filled by Lys338.

The protein belongs to the enolase family. Mg(2+) serves as cofactor.

The protein resides in the cytoplasm. It localises to the secreted. It is found in the cell surface. It catalyses the reaction (2R)-2-phosphoglycerate = phosphoenolpyruvate + H2O. Its pathway is carbohydrate degradation; glycolysis; pyruvate from D-glyceraldehyde 3-phosphate: step 4/5. Its function is as follows. Catalyzes the reversible conversion of 2-phosphoglycerate (2-PG) into phosphoenolpyruvate (PEP). It is essential for the degradation of carbohydrates via glycolysis. This chain is Enolase, found in Syntrophus aciditrophicus (strain SB).